A 605-amino-acid polypeptide reads, in one-letter code: Leucine-rich repeat-containing protein 40 (605 aa).

The interval 1–21 (MSRFKRGGKAPDPLSGFRAPK) is disordered. LRR repeat units follow at residues 83–104 (DLTKLILASNKLQALSEDISLL), 106–127 (ALVVLDIHDNQIASLPCAIREL), 129–151 (NLQKLNISHNKIKQLPNELQHLQ), 152–173 (NLKSFLLQHNQLEELPDSIGHL), 175–196 (ILEELDVSNNCLRSVSSSVGQL), 198–219 (GLVKFNLSSNKLTALPTEIGKM), 221–242 (NLRQLDCTSNLLENVPASVAGM), 244–265 (SLEQLYLRQNKLTYLPELPFLT), 266–287 (KLKELHVGNNQIQTLGPEHLQN), 290–311 (SLSVLELRYNKLKVLPKEISLL), 313–335 (GLERLDLSNNDIGSLPDTLGSLP), 336–357 (NLKSLQLDGNPLRGIRRDILNK), 429–450 (PITTVNFSKNQLTEVPARIVEM), 453–475 (SVYDVNLGFNKISSISLNLCMLL), 476–497 (KLTHLDMRNNALASLPPEMEAL), 499–520 (RLQSIILSFNRFKHFPDVLYTI), 522–543 (NLETILISSNQIGSIDPIQLKK), 546–567 (KLSTLDLQNNDLLQIPPALGNC), and 569–590 (SLRALHLEGNPFRNPRATILAK).

The sequence is that of Leucine-rich repeat-containing protein 40 (lrrc40) from Xenopus laevis (African clawed frog).